Reading from the N-terminus, the 338-residue chain is Mitochondrial transcription factor 1 (338 aa).

S-adenosyl-L-methionine is bound by residues Leu23, Asp76, Asp100, and Asn136.

It belongs to the class I-like SAM-binding methyltransferase superfamily. rRNA adenine N(6)-methyltransferase family.

It localises to the mitochondrion. In terms of biological role, mitochondrial transcription factor that confers selective promoter recognition on the core subunit of the yeast mitochondrial RNA polymerase. Interacts with DNA in a non-specific manner. This chain is Mitochondrial transcription factor 1 (MTF1), found in Lachancea kluyveri (Yeast).